The sequence spans 672 residues: Transmembrane 9 superfamily member 2 (672 aa).

The N-terminal stretch at 1–18 (MKRGVWLLIYCYATLTKG) is a signal peptide. At 19-307 (FSLPGLSPTT…DKYLHIYDPQ (289 aa)) the chain is on the extracellular side. Residues 308–328 (IQWFSLINFSVIVILLSSVVM) form a helical membrane-spanning segment. The Cytoplasmic portion of the chain corresponds to 329-383 (HSLLRALKSDLARYNELNLDNEFHEDSGWKLGHGDVFRTPSKSMLLSILVGSGMQ). A helical transmembrane segment spans residues 384-404 (LFLMVMCSIFFAAVGLVSPVS). Residues 405–410 (RGSLPT) are Extracellular-facing. The chain crosses the membrane as a helical span at residues 411–431 (VMFVLYALFGFVGSYASMGVY). Residues 432 to 447 (KFFRGPYWKANMILTP) are Cytoplasmic-facing. The helical transmembrane segment at 448–468 (ILLPGAIFLLIVIMNFFLLFA) threads the bilayer. Over 469-479 (HSSGVIPARSL) the chain is Extracellular. Residues 480 to 500 (FFIILLWFLVSVPLSFAGSIV) traverse the membrane as a helical segment. The Cytoplasmic portion of the chain corresponds to 501 to 532 (AHKQCNWDEHPTKTNQIARQIPYQPWYLRTAQ). The chain crosses the membrane as a helical span at residues 533–553 (ATLIAGIFSFGSIAVELYFIY). Residues 554–565 (SSLWFNKIFYMF) are Extracellular-facing. A helical membrane pass occupies residues 566 to 586 (GFLLFSFLLLTLTTSLVTILI). Residues 587 to 601 (TYYSLCLENWLWQWR) are Cytoplasmic-facing. A helical transmembrane segment spans residues 602–622 (SFIIGGLGCSIYTFIHSILFT). The Extracellular portion of the chain corresponds to 623–628 (KFKLGG). A helical transmembrane segment spans residues 629-649 (VITVVLYLGYSLIISALCCVV). At 650-672 (TGAIGFFSSMFFIRKIYSAIKVE) the chain is on the cytoplasmic side.

It belongs to the nonaspanin (TM9SF) (TC 9.A.2) family.

It is found in the vacuole membrane. In terms of biological role, with EMP70 and TMN3, plays a critical role in the late stages of a nutrient-controlled pathway notably regulating FLO11 gene expression. Acts downstream of RAS2 and TOR. Essential for cell adhesion and filamentous growth. May play a role as effector of cellular copper homeostasis. The protein is Transmembrane 9 superfamily member 2 (TMN2) of Saccharomyces cerevisiae (strain ATCC 204508 / S288c) (Baker's yeast).